The primary structure comprises 366 residues: Ribosomal RNA large subunit methyltransferase M (366 aa).

Residues Ser-188, Cys-221–Gly-224, Asp-240, Asp-260, and Asp-277 contribute to the S-adenosyl-L-methionine site. The active-site Proton acceptor is the Lys-306.

This sequence belongs to the class I-like SAM-binding methyltransferase superfamily. RNA methyltransferase RlmE family. RlmM subfamily. As to quaternary structure, monomer.

Its subcellular location is the cytoplasm. It carries out the reaction cytidine(2498) in 23S rRNA + S-adenosyl-L-methionine = 2'-O-methylcytidine(2498) in 23S rRNA + S-adenosyl-L-homocysteine + H(+). Catalyzes the 2'-O-methylation at nucleotide C2498 in 23S rRNA. The chain is Ribosomal RNA large subunit methyltransferase M from Musicola paradisiaca (strain Ech703) (Dickeya paradisiaca).